Consider the following 420-residue polypeptide: Fasciclin-like arabinogalactan protein 8 (420 aa).

Positions 1–25 (MAASQTFSLLAFTFSLLAFASTVSS) are cleaved as a signal peptide. 2 consecutive FAS1 domains span residues 26–172 (HNIT…DAPI) and 186–326 (SLSN…DNVL). Asn27, Asn128, Asn162, Asn189, and Asn273 each carry an N-linked (GlcNAc...) asparagine glycan. The segment at 335-394 (SKSPSPAPAPEPVTAPTPSPADAPSPTAASPPAPPTDESPESAPSDSPTGSANSKSANAA) is disordered. Pro residues predominate over residues 339 to 371 (SPAPAPEPVTAPTPSPADAPSPTAASPPAPPTD). The GPI-anchor amidated asparagine moiety is linked to residue Asn392. Residues 393–420 (AAVGVSTPSLFTALVTIAAIAVSVSLCS) constitute a propeptide, removed in mature form.

Belongs to the fasciclin-like AGP family. As to expression, expressed mainly in flowers and to a lesser extent in leaves and roots.

The protein resides in the cell membrane. Its function is as follows. May be a cell surface adhesion protein. This chain is Fasciclin-like arabinogalactan protein 8 (FLA8), found in Arabidopsis thaliana (Mouse-ear cress).